A 214-amino-acid polypeptide reads, in one-letter code: GTP cyclohydrolase 1 (214 aa).

The Zn(2+) site is built by C108, H111, and C179.

It belongs to the GTP cyclohydrolase I family. Toroid-shaped homodecamer, composed of two pentamers of five dimers.

It carries out the reaction GTP + H2O = 7,8-dihydroneopterin 3'-triphosphate + formate + H(+). It functions in the pathway cofactor biosynthesis; 7,8-dihydroneopterin triphosphate biosynthesis; 7,8-dihydroneopterin triphosphate from GTP: step 1/1. The sequence is that of GTP cyclohydrolase 1 from Shewanella putrefaciens (strain CN-32 / ATCC BAA-453).